Reading from the N-terminus, the 78-residue chain is Beta-defensin 135 (78 aa).

Residues 1 to 24 form the signal peptide; that stretch reads MATRSVLLALVVLNLLFYVPPGRS. Intrachain disulfides connect Cys-37-Cys-64 and Cys-48-Cys-66.

This sequence belongs to the beta-defensin family.

Its subcellular location is the secreted. Its function is as follows. Has antibacterial activity. This chain is Beta-defensin 135 (DEFB135), found in Pan troglodytes (Chimpanzee).